Reading from the N-terminus, the 79-residue chain is Small ribosomal subunit protein bS16cz (79 aa).

Belongs to the bacterial ribosomal protein bS16 family.

The protein localises to the plastid. It localises to the chloroplast. The protein is Small ribosomal subunit protein bS16cz of Arabidopsis thaliana (Mouse-ear cress).